We begin with the raw amino-acid sequence, 604 residues long: Aspartate--tRNA(Asp/Asn) ligase (604 aa).

L-aspartate is bound at residue Glu-175. An aspartate region spans residues Gln-199–Lys-202. Residues Arg-221 and His-456 each contribute to the L-aspartate site. ATP is bound at residue Arg-221–Glu-223. Residue Glu-496 participates in ATP binding. Arg-503 is a binding site for L-aspartate. Residue Gly-548–Arg-551 participates in ATP binding.

This sequence belongs to the class-II aminoacyl-tRNA synthetase family. Type 1 subfamily. As to quaternary structure, homodimer.

Its subcellular location is the cytoplasm. It carries out the reaction tRNA(Asx) + L-aspartate + ATP = L-aspartyl-tRNA(Asx) + AMP + diphosphate. Its function is as follows. Aspartyl-tRNA synthetase with relaxed tRNA specificity since it is able to aspartylate not only its cognate tRNA(Asp) but also tRNA(Asn). Reaction proceeds in two steps: L-aspartate is first activated by ATP to form Asp-AMP and then transferred to the acceptor end of tRNA(Asp/Asn). This chain is Aspartate--tRNA(Asp/Asn) ligase, found in Methylorubrum extorquens (strain CM4 / NCIMB 13688) (Methylobacterium extorquens).